Reading from the N-terminus, the 113-residue chain is Tubulin-folding cofactor A (113 aa).

The segment at 83–113 is disordered; it reads LEETDEKEGPEIEDAKKTVADVEKQFPTEDA. The span at 89–113 shows a compositional bias: basic and acidic residues; sequence KEGPEIEDAKKTVADVEKQFPTEDA.

This sequence belongs to the TBCA family. Monomer. Supercomplex made of cofactors A to E. Cofactors A and D function by capturing and stabilizing tubulin in a quasi-native conformation. Cofactor E binds to the cofactor D-tubulin complex; interaction with cofactor C then causes the release of tubulin polypeptides that are committed to the native state. Interacts with TUBB9. Expressed in leaves, roots, flowers and stems.

Its function is as follows. Tubulin-folding protein involved in the control of the alpha-/beta-tubulin monomer balance. Functions as a reservoir of bound and non-toxic beta-tubulin. Required in the developing embryo. The chain is Tubulin-folding cofactor A (TFCA) from Arabidopsis thaliana (Mouse-ear cress).